We begin with the raw amino-acid sequence, 248 residues long: Murein peptide amidase A (248 aa).

Residues 3–245 (RYYSNNQEIT…DAFIALLQHD (243 aa)) form the Peptidase M14 domain. Residues His60, Glu63, and His168 each coordinate Zn(2+). The active-site Proton donor/acceptor is Glu221.

It belongs to the peptidase M14 family. In terms of assembly, homodimer. Requires Zn(2+) as cofactor.

It localises to the cytoplasm. The enzyme catalyses L-alanyl-gamma-D-glutamyl-meso-2,6-diaminopimelate + H2O = L-alanyl-D-glutamate + meso-2,6-diaminopimelate. Its pathway is cell wall degradation; peptidoglycan degradation. In terms of biological role, involved in muropeptide degradation. Catalyzes the hydrolysis of the gamma-D-glutamyl-diaminopimelic acid (gamma-D-Glu-Dap) amide bond in the murein tripeptide L-alanyl-gamma-D-glutamyl-meso-diaminopimelic acid, leading to the formation of L-Ala-gamma-D-Glu and Dap. Has weak activity with L-Ala-gamma-D-Glu-L-Lys, MurNAc-tripeptide and gamma-D-Glu-meso-Dap. Cannot hydrolyze murein tetrapeptide. The polypeptide is Murein peptide amidase A (Vibrio campbellii (strain ATCC BAA-1116)).